The primary structure comprises 888 residues: Bifunctional uridylyltransferase/uridylyl-removing enzyme (888 aa).

Positions 1 to 338 (MIITSPLLDY…LPNYERKIEE (338 aa)) are uridylyltransferase. The disordered stretch occupies residues 182-204 (EQAKRHAQHNNTESNLEPDIKNA). The tract at residues 339-699 (INENFKLVDG…AHRQSAQDAV (361 aa)) is uridylyl-removing. An HD domain is found at 457 to 579 (VDAHTLLLIR…LGDMEHLDYL (123 aa)). ACT domains follow at residues 700–781 (QIFI…GLMQ) and 809–887 (MVEI…IVSQ).

It belongs to the GlnD family. Mg(2+) is required as a cofactor.

It carries out the reaction [protein-PII]-L-tyrosine + UTP = [protein-PII]-uridylyl-L-tyrosine + diphosphate. It catalyses the reaction [protein-PII]-uridylyl-L-tyrosine + H2O = [protein-PII]-L-tyrosine + UMP + H(+). With respect to regulation, uridylyltransferase (UTase) activity is inhibited by glutamine, while glutamine activates uridylyl-removing (UR) activity. Modifies, by uridylylation and deuridylylation, the PII regulatory proteins (GlnB and homologs), in response to the nitrogen status of the cell that GlnD senses through the glutamine level. Under low glutamine levels, catalyzes the conversion of the PII proteins and UTP to PII-UMP and PPi, while under higher glutamine levels, GlnD hydrolyzes PII-UMP to PII and UMP (deuridylylation). Thus, controls uridylylation state and activity of the PII proteins, and plays an important role in the regulation of nitrogen assimilation and metabolism. The polypeptide is Bifunctional uridylyltransferase/uridylyl-removing enzyme (Acinetobacter baylyi (strain ATCC 33305 / BD413 / ADP1)).